Here is a 196-residue protein sequence, read N- to C-terminus: Imidazole glycerol phosphate synthase subunit HisH (196 aa).

A Glutamine amidotransferase type-1 domain is found at 2–196 (KATLINYGVG…LRNFYSWVKR (195 aa)). The active-site Nucleophile is cysteine 76. Residues histidine 175 and glutamate 177 contribute to the active site.

As to quaternary structure, heterodimer of HisH and HisF.

It localises to the cytoplasm. The catalysed reaction is 5-[(5-phospho-1-deoxy-D-ribulos-1-ylimino)methylamino]-1-(5-phospho-beta-D-ribosyl)imidazole-4-carboxamide + L-glutamine = D-erythro-1-(imidazol-4-yl)glycerol 3-phosphate + 5-amino-1-(5-phospho-beta-D-ribosyl)imidazole-4-carboxamide + L-glutamate + H(+). It catalyses the reaction L-glutamine + H2O = L-glutamate + NH4(+). It participates in amino-acid biosynthesis; L-histidine biosynthesis; L-histidine from 5-phospho-alpha-D-ribose 1-diphosphate: step 5/9. IGPS catalyzes the conversion of PRFAR and glutamine to IGP, AICAR and glutamate. The HisH subunit catalyzes the hydrolysis of glutamine to glutamate and ammonia as part of the synthesis of IGP and AICAR. The resulting ammonia molecule is channeled to the active site of HisF. This is Imidazole glycerol phosphate synthase subunit HisH from Sulfurisphaera tokodaii (strain DSM 16993 / JCM 10545 / NBRC 100140 / 7) (Sulfolobus tokodaii).